An 82-amino-acid chain; its full sequence is Omega-conotoxin-like TxO6 (82 aa).

The first 22 residues, 1–22 (MKLTCVVIVAVLFLTAWTLVMA), serve as a signal peptide directing secretion. Positions 23 to 50 (DDSNNGLANLFSKSRDEMEDPEAAKLEK) are excised as a propeptide. 3 disulfides stabilise this stretch: C53–C71, C60–C76, and C70–C81.

It belongs to the conotoxin O1 superfamily. Expressed by the venom duct.

Its subcellular location is the secreted. Functionally, omega-conotoxins act at presynaptic membranes, they bind and block voltage-gated calcium channels (Cav). The sequence is that of Omega-conotoxin-like TxO6 from Conus textile (Cloth-of-gold cone).